A 405-amino-acid chain; its full sequence is DNA polymerase IV 1 (405 aa).

The UmuC domain maps to 23 to 203 (IAHIDCDAFY…RPVTTIWGVG (181 aa)). Aspartate 27 and aspartate 120 together coordinate Mg(2+). Glutamate 121 is an active-site residue.

It belongs to the DNA polymerase type-Y family. Monomer. Requires Mg(2+) as cofactor.

The protein resides in the cytoplasm. It carries out the reaction DNA(n) + a 2'-deoxyribonucleoside 5'-triphosphate = DNA(n+1) + diphosphate. Functionally, poorly processive, error-prone DNA polymerase involved in untargeted mutagenesis. Copies undamaged DNA at stalled replication forks, which arise in vivo from mismatched or misaligned primer ends. These misaligned primers can be extended by PolIV. Exhibits no 3'-5' exonuclease (proofreading) activity. May be involved in translesional synthesis, in conjunction with the beta clamp from PolIII. The protein is DNA polymerase IV 1 (dinB1) of Agrobacterium fabrum (strain C58 / ATCC 33970) (Agrobacterium tumefaciens (strain C58)).